Reading from the N-terminus, the 283-residue chain is Polyamine aminopropyltransferase (283 aa).

The PABS domain occupies proline 5–aspartate 238. Residue glutamine 32 coordinates S-methyl-5'-thioadenosine. Spermidine is bound by residues histidine 63 and aspartate 87. S-methyl-5'-thioadenosine is bound by residues glutamate 107 and aspartate 139–glycine 140. Aspartate 158 serves as the catalytic Proton acceptor. Spermidine is bound at residue aspartate 158–aspartate 161.

It belongs to the spermidine/spermine synthase family. In terms of assembly, homodimer or homotetramer.

The protein resides in the cytoplasm. The catalysed reaction is S-adenosyl 3-(methylsulfanyl)propylamine + putrescine = S-methyl-5'-thioadenosine + spermidine + H(+). It functions in the pathway amine and polyamine biosynthesis; spermidine biosynthesis; spermidine from putrescine: step 1/1. Catalyzes the irreversible transfer of a propylamine group from the amino donor S-adenosylmethioninamine (decarboxy-AdoMet) to putrescine (1,4-diaminobutane) to yield spermidine. In Prochlorococcus marinus subsp. pastoris (strain CCMP1986 / NIES-2087 / MED4), this protein is Polyamine aminopropyltransferase.